Consider the following 323-residue polypeptide: HTH-type transcriptional activator CmpR (323 aa).

An HTH lysR-type domain is found at 4–61; the sequence is LTLHQLKVFEAAARHSSFTRAAEELYLTQPTVSIQVKQLTKAVGLPLFEQIGKRLYLT. The segment at residues 21-40 is a DNA-binding region (H-T-H motif); that stretch reads FTRAAEELYLTQPTVSIQVK. Positions 304–323 are disordered; the sequence is IPESTTTDPELDAPQPVVGV.

It belongs to the LysR transcriptional regulatory family.

It is found in the cytoplasm. Its function is as follows. Activates transcription of the cmpABCD operon under carbon dioxide-limited conditions. The protein is HTH-type transcriptional activator CmpR (cmpR) of Synechococcus elongatus (strain ATCC 33912 / PCC 7942 / FACHB-805) (Anacystis nidulans R2).